Reading from the N-terminus, the 143-residue chain is Nucleoside diphosphate kinase (143 aa).

ATP contacts are provided by Lys11, Phe59, Arg87, Thr93, Arg104, and Asn114. The active-site Pros-phosphohistidine intermediate is His117.

The protein belongs to the NDK family. In terms of assembly, homotetramer. The cofactor is Mg(2+).

It localises to the cytoplasm. It carries out the reaction dZDP + ATP = dZTP + ADP. The catalysed reaction is a 2'-deoxyribonucleoside 5'-diphosphate + ATP = a 2'-deoxyribonucleoside 5'-triphosphate + ADP. It catalyses the reaction a ribonucleoside 5'-diphosphate + ATP = a ribonucleoside 5'-triphosphate + ADP. The protein operates within purine metabolism. Major role in the synthesis of nucleoside triphosphates other than ATP. The ATP gamma phosphate is transferred to the NDP beta phosphate via a ping-pong mechanism, using a phosphorylated active-site intermediate. Functionally, (Microbial infection) Catalyzes the phosphorylation of dZDP to dZTP, when the bacterium is infected by a phage that produces the substrate for the synthesis of dZTP (2- amino-2'-deoxyadenosine 5'-triphosphate), which is then used by the phage as a DNA polymerase substrate. The polypeptide is Nucleoside diphosphate kinase (Acinetobacter baumannii (strain AB307-0294)).